Reading from the N-terminus, the 205-residue chain is N-(5'-phosphoribosyl)anthranilate isomerase (205 aa).

Belongs to the TrpF family.

The catalysed reaction is N-(5-phospho-beta-D-ribosyl)anthranilate = 1-(2-carboxyphenylamino)-1-deoxy-D-ribulose 5-phosphate. The protein operates within amino-acid biosynthesis; L-tryptophan biosynthesis; L-tryptophan from chorismate: step 3/5. The protein is N-(5'-phosphoribosyl)anthranilate isomerase of Phocaeicola vulgatus (strain ATCC 8482 / DSM 1447 / JCM 5826 / CCUG 4940 / NBRC 14291 / NCTC 11154) (Bacteroides vulgatus).